The primary structure comprises 308 residues: GTPase Era (308 aa).

An Era-type G domain is found at 9-179 (RAGFVALIGE…RAWLGASLPE (171 aa)). Residues 17–24 (GEPNAGKS) form a G1 region. 17-24 (GEPNAGKS) is a binding site for GTP. Residues 43 to 47 (QTTRA) are G2. The segment at 64 to 67 (DTPG) is G3. Residues 64 to 68 (DTPGL) and 129 to 132 (NKID) each bind GTP. Residues 129–132 (NKID) are G4. Residues 158-160 (ISA) are G5. The KH type-2 domain occupies 210-287 (LHQELPYQLT…HLFLQVKVRP (78 aa)).

Belongs to the TRAFAC class TrmE-Era-EngA-EngB-Septin-like GTPase superfamily. Era GTPase family. As to quaternary structure, monomer.

Its subcellular location is the cytoplasm. The protein resides in the cell inner membrane. Functionally, an essential GTPase that binds both GDP and GTP, with rapid nucleotide exchange. Plays a role in 16S rRNA processing and 30S ribosomal subunit biogenesis and possibly also in cell cycle regulation and energy metabolism. The sequence is that of GTPase Era from Dinoroseobacter shibae (strain DSM 16493 / NCIMB 14021 / DFL 12).